Here is a 563-residue protein sequence, read N- to C-terminus: Proline--tRNA ligase (563 aa).

Belongs to the class-II aminoacyl-tRNA synthetase family. ProS type 1 subfamily. As to quaternary structure, homodimer.

The protein localises to the cytoplasm. It catalyses the reaction tRNA(Pro) + L-proline + ATP = L-prolyl-tRNA(Pro) + AMP + diphosphate. In terms of biological role, catalyzes the attachment of proline to tRNA(Pro) in a two-step reaction: proline is first activated by ATP to form Pro-AMP and then transferred to the acceptor end of tRNA(Pro). As ProRS can inadvertently accommodate and process non-cognate amino acids such as alanine and cysteine, to avoid such errors it has two additional distinct editing activities against alanine. One activity is designated as 'pretransfer' editing and involves the tRNA(Pro)-independent hydrolysis of activated Ala-AMP. The other activity is designated 'posttransfer' editing and involves deacylation of mischarged Ala-tRNA(Pro). The misacylated Cys-tRNA(Pro) is not edited by ProRS. This is Proline--tRNA ligase from Persephonella marina (strain DSM 14350 / EX-H1).